Reading from the N-terminus, the 329-residue chain is Malate dehydrogenase (329 aa).

Residue 13-19 participates in NAD(+) binding; that stretch reads GAAGNIS. Substrate-binding residues include R94 and R100. Residues N107, Q114, and 131-133 contribute to the NAD(+) site; that span reads VGN. 2 residues coordinate substrate: N133 and R164. The Proton acceptor role is filled by H189.

The protein belongs to the LDH/MDH superfamily. MDH type 2 family.

The catalysed reaction is (S)-malate + NAD(+) = oxaloacetate + NADH + H(+). Its function is as follows. Catalyzes the reversible oxidation of malate to oxaloacetate. The polypeptide is Malate dehydrogenase (Psychrobacter cryohalolentis (strain ATCC BAA-1226 / DSM 17306 / VKM B-2378 / K5)).